A 451-amino-acid polypeptide reads, in one-letter code: Tubulin gamma-1 chain (451 aa).

S131 is modified (phosphoserine; by BRSK1). GTP is bound at residue 142–148 (AGGTGSG).

The protein belongs to the tubulin family. In terms of assembly, component of the gamma-tubulin ring complex (gTuRC) consisting of TUBGCP2, TUBGCP3, TUBGCP4, TUBGCP5 and TUBGCP6 and gamma-tubulin TUBG1 or TUBG2. TUBGCP2, TUBGCP3, TUBGCP4, TUBGCP5 and TUBGCP6 assemble in a 5:5:2:1:1 stoichiometry; each is associated with a gamma-tubulin, thereby arranging 14 gamma-tubulins in a helical manner. Gamma-tubulin at the first position is blocked by TUBGCP3 at the last position, allowing 13 protafilaments to grow into a microtubule. The gTuRC (via TUBGCP3 and TUBGCP6) interacts with ACTB and MZT1; the interactions form a luminal bridge that stabilizes the initial structure during complex assembly. The gTuRC (via TUBGCP2) interacts with MZT2A/MZT2B and CDK5RAP2 (via CM1 motif); the interactions play a role in gTuRC activation. Interacts with alpha-beta tubulin heterodimers; the interaction allows microtubules to nucleate from the gTuRC. Interacts with B9D2. Interacts with CDK5RAP2; the interaction is leading to centrosomal localization of TUBG1 and CDK5RAP2. Interacts with CIMAP3. Interacts with SAS6 and NUP62 at the centrosome. Interacts with EML3 (phosphorylated at 'Thr-881') and HAUS8. Interacts with DNM2; this interaction may participate in centrosome cohesion. Interacts with CCDC66. In terms of processing, phosphorylation at Ser-131 by BRSK1 regulates centrosome duplication, possibly by mediating relocation of gamma-tubulin and its associated proteins from the cytoplasm to the centrosome.

It is found in the cytoplasm. The protein resides in the cytoskeleton. It localises to the microtubule organizing center. The protein localises to the centrosome. Its subcellular location is the spindle. Its function is as follows. Tubulin is the major constituent of microtubules, protein filaments consisting of alpha- and beta-tubulin heterodimers. Gamma-tubulin is a key component of the gamma-tubulin ring complex (gTuRC) which mediates microtubule nucleation. The gTuRC regulates the minus-end nucleation of alpha-beta tubulin heterodimers that grow into microtubule protafilaments, a critical step in centrosome duplication and spindle formation. The chain is Tubulin gamma-1 chain from Mus musculus (Mouse).